Here is a 787-residue protein sequence, read N- to C-terminus: (-)-kolavenyl diphosphate synthase, chloroplastic (787 aa).

Residues 1 to 47 (MSFATSLPRPTTTGAAGFGLPLATCISLSVSHSFSPKFGICNNTSLR) constitute a chloroplast transit peptide. Position 237 (lysine 237) interacts with substrate. Aspartate 368 and aspartate 370 together coordinate Mg(2+). The DXDD motif motif lies at 368–371 (DSDD). A substrate-binding site is contributed by lysine 454.

Belongs to the terpene synthase family. Tpsc subfamily. Requires Mg(2+) as cofactor. As to expression, expressed in peltate glandular trichomes of leaves. Highly expressed in the first leaf pair.

The protein resides in the plastid. Its subcellular location is the chloroplast. It carries out the reaction (2E,6E,10E)-geranylgeranyl diphosphate = (-)-kolavenyl diphosphate. With respect to regulation, inhibited by high concentrations of magnesium. Involved in the biosynthesis of clerodane diterpenoids natural products, including salvinorin A with potent agonistic activity on brain kappa-opioid receptors, thus conferring hallucinogenic properties. Diterpene synthase that catalyzes the formation of (-)-kolavenyl diphosphate from geranylgeranyl diphosphate (GGPP) as the first reaction in salvinorin A biosynthesis. This chain is (-)-kolavenyl diphosphate synthase, chloroplastic, found in Salvia divinorum (Maria pastora).